The sequence spans 182 residues: Adenine phosphoribosyltransferase (182 aa).

Belongs to the purine/pyrimidine phosphoribosyltransferase family. In terms of assembly, homodimer.

It localises to the cytoplasm. It carries out the reaction AMP + diphosphate = 5-phospho-alpha-D-ribose 1-diphosphate + adenine. The protein operates within purine metabolism; AMP biosynthesis via salvage pathway; AMP from adenine: step 1/1. Functionally, catalyzes a salvage reaction resulting in the formation of AMP, that is energically less costly than de novo synthesis. The protein is Adenine phosphoribosyltransferase of Pseudomonas paraeruginosa (strain DSM 24068 / PA7) (Pseudomonas aeruginosa (strain PA7)).